Reading from the N-terminus, the 441-residue chain is Glutamate--tRNA ligase 1 (441 aa).

A 'HIGH' region motif is present at residues 9-19 (PSPTGFIHVGN). The 'KMSKS' region motif lies at 239 to 243 (ALSKR). Lys-242 is a binding site for ATP.

Belongs to the class-I aminoacyl-tRNA synthetase family. Glutamate--tRNA ligase type 1 subfamily. As to quaternary structure, monomer.

It localises to the cytoplasm. The enzyme catalyses tRNA(Glu) + L-glutamate + ATP = L-glutamyl-tRNA(Glu) + AMP + diphosphate. Functionally, catalyzes the attachment of glutamate to tRNA(Glu) in a two-step reaction: glutamate is first activated by ATP to form Glu-AMP and then transferred to the acceptor end of tRNA(Glu). The chain is Glutamate--tRNA ligase 1 from Cereibacter sphaeroides (strain ATCC 17025 / ATH 2.4.3) (Rhodobacter sphaeroides).